Here is a 334-residue protein sequence, read N- to C-terminus: MMDTPEHASTSSRRQLLGMLAAGGTTAVAGCTTITGGGDTTSTGGGDSGSSSIVVGSKGYGEQVTLGYVAYELLANTTNATLVDETGFGGNAAISEAYRTGNVHAYYDYMGSLWSSHPPKHDSADFDTPDAQYDALKSEMESEHPIRILDRADWQNTWAVFVAERAVEGTGIQSISDLAAHVNSRNYDIRPAFGDGFRSRSDGLDALLDYYEFDPERVTAWASEREFLETASAQAAGTAVDEGYADLGVGYSTSAWLTDVDSVRVLDDDRNFWPFFHPVGVVHEDVATDAVVAALNTMPDAIPDAETMQALNSRAAASGNQQAAADHLQNNDFI.

The signal sequence occupies residues Met-1–Ala-29.

The protein belongs to the OsmX family.

It localises to the cell membrane. In terms of biological role, mediates chemotaxis towards compatible osmolytes. May function as a receptor that binds the osmolytes and transduces a signal to CosT. Has probably no additional role in transport. This Halobacterium salinarum (strain ATCC 29341 / DSM 671 / R1) protein is Chemotactic signal transduction system substrate-binding protein CosB (cosB).